A 486-amino-acid polypeptide reads, in one-letter code: Hematopoietic lineage cell-specific protein (486 aa).

Residues 27–66 are involved in HAX-1 binding; that stretch reads FVNDISEKEQRWGAKTIEGSGRTEHINIHQLRNKVSEEHD. An N6-acetyllysine modification is found at K41. Cortactin repeat units follow at residues 79 to 115, 116 to 152, and 153 to 189; these read ASHGYGGRFGVERDRMDKSAVGHEYVAEVEKHSSQTD, AAKGFGGKYGVERDRADKSAVGFDYKGEVEKHTSQKD, and YSRGFGGRYGVEKDKWDKAALGYDYKGETEKHESQRD. An N6-acetyllysine modification is found at K123. Phosphotyrosine is present on Y140. The stretch at 190–212 is one Cortactin 4; truncated repeat; it reads YAKGFGGQYGIQKDRVDKSAVGF. N6-acetyllysine is present on K192. Position 198 is a phosphotyrosine (Y198). Y222 bears the Phosphotyrosine; by FGR mark. K241 bears the N6-acetyllysine mark. Residues 243 to 276 are compositionally biased toward basic and acidic residues; it reads ESMAEEKRKREEEEKAQQVARRQQERKAVTKRSP. The segment at 243–419 is disordered; it reads ESMAEEKRKR…SALAGSSGCP (177 aa). S275 is subject to Phosphoserine. T308 carries the post-translational modification Phosphothreonine. Over residues 315–324 the composition is skewed to basic and acidic residues; the sequence is EPVRTSREHP. Composition is skewed to acidic residues over residues 353–383 and 390–405; these read QVEEEPVYEAEPEPEPEPEPEPENDYEDVEE and EDEPEGDYEEVLEPED. A phosphotyrosine; by SYK and FES mark is found at Y378 and Y397. Residues 406–419 show a composition bias toward low complexity; the sequence is SSFSSALAGSSGCP. The 59-residue stretch at 428-486 folds into the SH3 domain; the sequence is ALGISAVAVYDYQGEGSDELSFDPDDVITDIEMVDEGWWRGRCHGHFGLFPANYVKLLE.

Associates with the SH2 and SH3 domains of LCK. Binding to he LCK SH3 domain occurs constitutively, while binding to the LCK SH2 domain occurs only upon TCR stimulation. A similar binding pattern was observed with LYN, but not with FYN in which the FYN SH2 region associates upon TCR stimulation but the FYN SH3 region does not associate regardless of TCR stimulation. Directly associates with HAX1, through binding to its C-terminal region. Interacts with HS1BP3. Interacts with FES/FPS. Interacts (via SH2 domain) with FGR. Forms a multiprotein complex with LYN and ANKRD54. In terms of processing, phosphorylated by FES. Phosphorylated by LYN, FYN and FGR after cross-linking of surface IgM on B-cells. Phosphorylation by LYN, FYN and FGR requires prior phosphorylation by SYK or FES. As to expression, expressed only in tissues and cells of hematopoietic origin.

It localises to the membrane. The protein localises to the cytoplasm. The protein resides in the mitochondrion. Its function is as follows. Substrate of the antigen receptor-coupled tyrosine kinase. Plays a role in antigen receptor signaling for both clonal expansion and deletion in lymphoid cells. May also be involved in the regulation of gene expression. The chain is Hematopoietic lineage cell-specific protein (HCLS1) from Homo sapiens (Human).